A 408-amino-acid polypeptide reads, in one-letter code: Peptidase T (408 aa).

His-78 lines the Zn(2+) pocket. The active site involves Asp-80. A Zn(2+)-binding site is contributed by Asp-141. Glu-175 acts as the Proton acceptor in catalysis. 3 residues coordinate Zn(2+): Glu-176, Asp-198, and His-380.

The protein belongs to the peptidase M20B family. Requires Zn(2+) as cofactor.

Its subcellular location is the cytoplasm. It carries out the reaction Release of the N-terminal residue from a tripeptide.. Its function is as follows. Cleaves the N-terminal amino acid of tripeptides. The protein is Peptidase T of Halothermothrix orenii (strain H 168 / OCM 544 / DSM 9562).